The following is a 231-amino-acid chain: Verlamelin biosynthesis protein B (231 aa).

It functions in the pathway secondary metabolite biosynthesis. Part of the gene cluster that mediates the biosynthesis of verlamelin, a lipopeptide that exhibits antifungal activity against plant pathogenic fungi. Verlamelin is a cyclic hexadepsipeptide and is bridged by ester bonding between a 5-hydroxytetradecanoic acid moiety and a carboxyl group on the terminal Val of amide-bonded tetradecanoyl-hexapeptide D-allo-Thr-D-Ala-L-Pro-L-Gln-D-Tyr-L-Val. VlmA and vlmB are altogether regarded as essential components in the biosynthesis of 5-hydroxytetradecanoic acid. VlmA catalyzes the hydroxylation at position C5 of tetradecanoic acid produced in primary metabolism, while the precise function of vlmB still remains to be solved. To be loaded onto the waiting NRPS, 5-hydroxytetradecanoic acid is activated in the form of acyladenylate by the AMP-dependent ligase vlmC. VlmS seems to accept the fatty-acyl intermediate onto the initial module to further elongate amino acid residues by the downstream modules. In addition, in the last module at its C-terminus, vlmS contains a surplus condensation (C) domain that may be involved in cyclization, the last step to form verlamelin. The sequence is that of Verlamelin biosynthesis protein B from Lecanicillium sp.